A 70-amino-acid chain; its full sequence is ATP synthase subunit c (70 aa).

2 helical membrane passes run 4–24 and 48–68; these read IAAGIALCGSAIGAGIGNGML and ISMALVEAMPIIVIAMSFVLI.

The protein belongs to the ATPase C chain family. As to quaternary structure, F-type ATPases have 2 components, F(1) - the catalytic core - and F(0) - the membrane proton channel. F(1) has five subunits: alpha(3), beta(3), gamma(1), delta(1), epsilon(1). F(0) has three main subunits: a(1), b(2) and c(10-14). The alpha and beta chains form an alternating ring which encloses part of the gamma chain. F(1) is attached to F(0) by a central stalk formed by the gamma and epsilon chains, while a peripheral stalk is formed by the delta and b chains.

The protein localises to the cell membrane. Its function is as follows. F(1)F(0) ATP synthase produces ATP from ADP in the presence of a proton or sodium gradient. F-type ATPases consist of two structural domains, F(1) containing the extramembraneous catalytic core and F(0) containing the membrane proton channel, linked together by a central stalk and a peripheral stalk. During catalysis, ATP synthesis in the catalytic domain of F(1) is coupled via a rotary mechanism of the central stalk subunits to proton translocation. In terms of biological role, key component of the F(0) channel; it plays a direct role in translocation across the membrane. A homomeric c-ring of between 10-14 subunits forms the central stalk rotor element with the F(1) delta and epsilon subunits. The protein is ATP synthase subunit c of Oenococcus oeni (strain ATCC BAA-331 / PSU-1).